We begin with the raw amino-acid sequence, 348 residues long: Centromere protein L (348 aa).

The protein belongs to the CENP-L/IML3 family.

The protein localises to the nucleus. It localises to the chromosome. Its subcellular location is the centromere. Its function is as follows. Probable component of a centromeric complex involved in assembly of kinetochore proteins, mitotic progression and chromosome segregation. This Xenopus tropicalis (Western clawed frog) protein is Centromere protein L (cenpl).